The primary structure comprises 610 residues: UvrABC system protein C (610 aa).

In terms of domain architecture, GIY-YIG spans 19-97 (GAPGVYKMLD…IKRHKPRYNI (79 aa)). Residues 207–242 (EALIDRLAQRMEQAAQRLEFEKAARYRDQISNLRTV) enclose the UVR domain.

This sequence belongs to the UvrC family. As to quaternary structure, interacts with UvrB in an incision complex.

It is found in the cytoplasm. Functionally, the UvrABC repair system catalyzes the recognition and processing of DNA lesions. UvrC both incises the 5' and 3' sides of the lesion. The N-terminal half is responsible for the 3' incision and the C-terminal half is responsible for the 5' incision. The protein is UvrABC system protein C of Methylococcus capsulatus (strain ATCC 33009 / NCIMB 11132 / Bath).